The primary structure comprises 635 residues: tRNA 5-methylaminomethyl-2-thiouridine biosynthesis bifunctional protein MnmC (635 aa).

Residues 1–231 (MPITPASLSF…KRQMLRGRYL (231 aa)) are tRNA (mnm(5)s(2)U34)-methyltransferase. Residues 249–635 (IGAGVAGTSI…RPARTLRGED (387 aa)) form an FAD-dependent cmnm(5)s(2)U34 oxidoreductase region.

This sequence in the N-terminal section; belongs to the methyltransferase superfamily. tRNA (mnm(5)s(2)U34)-methyltransferase family. The protein in the C-terminal section; belongs to the DAO family. FAD is required as a cofactor.

Its subcellular location is the cytoplasm. The enzyme catalyses 5-aminomethyl-2-thiouridine(34) in tRNA + S-adenosyl-L-methionine = 5-methylaminomethyl-2-thiouridine(34) in tRNA + S-adenosyl-L-homocysteine + H(+). Catalyzes the last two steps in the biosynthesis of 5-methylaminomethyl-2-thiouridine (mnm(5)s(2)U) at the wobble position (U34) in tRNA. Catalyzes the FAD-dependent demodification of cmnm(5)s(2)U34 to nm(5)s(2)U34, followed by the transfer of a methyl group from S-adenosyl-L-methionine to nm(5)s(2)U34, to form mnm(5)s(2)U34. This Azoarcus sp. (strain BH72) protein is tRNA 5-methylaminomethyl-2-thiouridine biosynthesis bifunctional protein MnmC.